Consider the following 683-residue polypeptide: Protein hook (683 aa).

One can recognise a Calponin-homology (CH) domain in the interval 5-123; that stretch reads NGMYYSLLEW…RLLQLVLGCA (119 aa). Coiled coils occupy residues 135–440 and 484–594; these read EIMC…LKCG and QTAL…AKEV.

It belongs to the hook family. Homodimer. Interacts with microtubules via its N-terminus.

Its subcellular location is the cytoplasm. The protein localises to the cytoskeleton. It is found in the endosome. It localises to the synapse. Functionally, involved in endocytic trafficking by stabilizing organelles of the endocytic pathway. Probably acts as a cytoskeletal linker protein required to tether endosome vesicles to the cytoskeleton. Involved in modulation of endocytosis at stages required for down-regulation of membrane proteins that control synapse size. Not involved in synaptic vesicle recycling. Required in R7 cells for boss endocytosis into multivesicular bodies (MVBs). Has a role in regulating adult longevity. The sequence is that of Protein hook from Drosophila grimshawi (Hawaiian fruit fly).